Reading from the N-terminus, the 586-residue chain is Kelch-like protein 7 (586 aa).

The 68-residue stretch at C44–S111 folds into the BTB domain. Positions C146–Q248 constitute a BACK domain. Kelch repeat units lie at residues R294–N336, V337–G382, K383–G430, L431–D481, I483–S528, and V530–D575.

Homodimer. Component of the BCR(KLHL7) E3 ubiquitin ligase complex, at least composed of CUL3 and KLHL7 and RBX1. As to expression, widely expressed, with highest levels in adult and fetal heart, CNS and adult testis.

The protein localises to the nucleus. The protein resides in the cytoplasm. Its pathway is protein modification; protein ubiquitination. Its function is as follows. Substrate-specific adapter of a BCR (BTB-CUL3-RBX1) E3 ubiquitin ligase complex. The BCR(KLHL7) complex acts by mediating ubiquitination and subsequent degradation of substrate proteins. Probably mediates 'Lys-48'-linked ubiquitination. The polypeptide is Kelch-like protein 7 (KLHL7) (Homo sapiens (Human)).